The following is a 386-amino-acid chain: Methylthioribose-1-phosphate isomerase (386 aa).

Aspartate 261 serves as the catalytic Proton donor.

This sequence belongs to the eIF-2B alpha/beta/delta subunits family. MtnA subfamily.

It is found in the cytoplasm. Its subcellular location is the nucleus. It carries out the reaction 5-(methylsulfanyl)-alpha-D-ribose 1-phosphate = 5-(methylsulfanyl)-D-ribulose 1-phosphate. It functions in the pathway amino-acid biosynthesis; L-methionine biosynthesis via salvage pathway; L-methionine from S-methyl-5-thio-alpha-D-ribose 1-phosphate: step 1/6. Its function is as follows. Catalyzes the interconversion of methylthioribose-1-phosphate (MTR-1-P) into methylthioribulose-1-phosphate (MTRu-1-P). The chain is Methylthioribose-1-phosphate isomerase from Paracoccidioides brasiliensis (strain Pb03).